The sequence spans 1465 residues: Vacuolar heme ABC transmembrane exporter abc3 (1465 aa).

At 1 to 8 the chain is on the extracellular side; that stretch reads MITANKGL. Residues 9–29 traverse the membrane as a helical segment; it reads SLVLLIPNLFALVSGGLQYVF. The Cytoplasmic portion of the chain corresponds to 30–42; that stretch reads DVRRRIFRPHFSQ. A helical membrane pass occupies residues 43–63; that stretch reads FWTIWMKFFSIALVIITQIYV. The Extracellular segment spans residues 64-69; sequence GYKTKN. A helical membrane pass occupies residues 70–90; it reads IGWNFFSVVTYCFVLFLQFAE. Over 91 to 97 the chain is Cytoplasmic; that stretch reads QSTLRVP. Residues 98-118 traverse the membrane as a helical segment; that stretch reads MASLLIFWLLKVVTSLLILLF. At 119 to 129 the chain is on the extracellular side; that stretch reads SPYIAITSMAR. The chain crosses the membrane as a helical span at residues 130–150; it reads LLTLITLFCSLVCFISEVYVP. 151–152 contributes to the heme binding site; sequence PC. At 151–235 the chain is on the cytoplasmic side; the sequence is PCNRVWYSDD…IYHSKNKRRS (85 aa). Residues 236–256 form a helical membrane-spanning segment; sequence LFLWKLLFFNHWKLVALITIT. Positions 250 to 539 constitute an ABC transmembrane type-1 1 domain; the sequence is VALITITKLI…LPTVISSLLE (290 aa). Residues 257–291 are Extracellular-facing; the sequence is KLIQDVLAFVQPTLIQKTILFISSYTSPNPESPSR. The helical transmembrane segment at 292–312 threads the bilayer; the sequence is GFIIAILVLVANFLQTLLLQQ. At 313 to 362 the chain is on the cytoplasmic side; the sequence is YNQLIMLLGMRWKTELLASIYRKSLLLSSSARQNRSIGDIINYMAVDTQK. The chain crosses the membrane as a helical span at residues 363–383; sequence ISDLPIYLFIIVSGPFQIALA. Residues 384–394 lie on the Extracellular side of the membrane; it reads LSNLYHLMGYS. Residues 395 to 415 form a helical membrane-spanning segment; the sequence is AFTGVAASVILFPCNIIVANV. At 416–480 the chain is on the cytoplasmic side; the sequence is YKKFQSILMK…KIGFITAIGD (65 aa). The helical transmembrane segment at 481 to 501 threads the bilayer; the sequence is FAWIFTTIIVTTVAFGAFIIF. At 502-511 the chain is on the extracellular side; the sequence is HGKTQALTAD. The helical transmembrane segment at 512 to 532 threads the bilayer; the sequence is IVFPAVSLFNLLQFPLAMLPT. Residues 533–899 lie on the Cytoplasmic side of the membrane; it reads VISSLLEASV…VYWMYFKSCS (367 aa). The 230-residue stretch at 575–804 folds into the ABC transporter 1 domain; it reads LEIKSGTFSW…TNSELKQQLS (230 aa). 614 to 621 provides a ligand contact to ATP; it reads GKVGAGKS. Disordered stretches follow at residues 805 to 824 and 840 to 869; these read EFNDEKDTQPLPEHTTSYPS and TYSSSERKDSSNKYKSRKRNPIRQKVTEDD. The chain crosses the membrane as a helical span at residues 900-920; the sequence is IGLILLYFFFIISGIMMNVAT. The 287-residue stretch at 903–1189 folds into the ABC transmembrane type-1 2 domain; the sequence is ILLYFFFIIS…IVQQSVDAEN (287 aa). Residues 921–939 lie on the Extracellular side of the membrane; sequence NVWLKHWSEENGKSSSELN. The helical transmembrane segment at 940-960 threads the bilayer; the sequence is PSPYFYLGIYLFFGFLSCAFI. Topologically, residues 961 to 1033 are cytoplasmic; that stretch reads SSSSLTMTVL…FFFRNSIQVL (73 aa). The helical transmembrane segment at 1034 to 1054 threads the bilayer; sequence FILGVICYSAPLSLLLIVPLF. Topologically, residues 1055-1465 are extracellular; sequence FLYLYNRAYY…YSLAKESGLI (411 aa). Residues 1226 to 1460 enclose the ABC transporter 2 domain; sequence VSFNHYSAKY…KDSMFYSLAK (235 aa). 1260–1267 is an ATP binding site; the sequence is GRTGAGKS.

This sequence belongs to the ABC transporter superfamily.

It is found in the vacuole membrane. Its function is as follows. Iron-regulated vacuolar transporter that mobilizes stored heme from the vacuole to the cytosol in response to iron deficiency. In Schizosaccharomyces pombe (strain 972 / ATCC 24843) (Fission yeast), this protein is Vacuolar heme ABC transmembrane exporter abc3.